Consider the following 210-residue polypeptide: Chaperone protein TorD (210 aa).

The protein belongs to the TorD/DmsD family. TorD subfamily.

The protein resides in the cytoplasm. In terms of biological role, involved in the biogenesis of TorA. Acts on TorA before the insertion of the molybdenum cofactor and, as a result, probably favors a conformation of the apoenzyme that is competent for acquiring the cofactor. The sequence is that of Chaperone protein TorD from Salmonella dublin (strain CT_02021853).